The chain runs to 324 residues: MLQQKQSLLEHKPVLSKELEKLVNHYRTLSLNGQCAQYIPALREANQTYLGLYVVHSNGIEIKSGDWQVPFTLQSISKIINFIAACLDRGITYVLDRVDVEPTGDPFNSMVRLEMRKTGKPFNPMINAGAITVASLLSGKSPTEKLESVYSLVEKMLGRRASANEAVFHSEWQTAHRNRSLAYYLKDTGYLESEVDDALHVYFTLCAIEVATKDIAKIGLILANNGYDPLSHQQIFPKEVAKLTKALMLTCGMYNASGTFAAHIGIPAKSGVSGGIMAAVPARGRSDEAMGIGIYGPAIDDFGNSVAGVALLKHLSHMWDLSIF.

The substrate site is built by serine 75, asparagine 127, glutamate 171, asparagine 178, tyrosine 202, tyrosine 254, and valine 272.

It belongs to the glutaminase family. In terms of assembly, homotetramer.

The catalysed reaction is L-glutamine + H2O = L-glutamate + NH4(+). This is Glutaminase 2 from Halalkalibacterium halodurans (strain ATCC BAA-125 / DSM 18197 / FERM 7344 / JCM 9153 / C-125) (Bacillus halodurans).